The following is a 536-amino-acid chain: Bifunctional purine biosynthesis protein PurH (536 aa).

The region spanning 8-158 (IPAPDEVRIK…KNHAYVTIVT (151 aa)) is the MGS-like domain.

This sequence belongs to the PurH family.

It carries out the reaction (6R)-10-formyltetrahydrofolate + 5-amino-1-(5-phospho-beta-D-ribosyl)imidazole-4-carboxamide = 5-formamido-1-(5-phospho-D-ribosyl)imidazole-4-carboxamide + (6S)-5,6,7,8-tetrahydrofolate. It catalyses the reaction IMP + H2O = 5-formamido-1-(5-phospho-D-ribosyl)imidazole-4-carboxamide. It participates in purine metabolism; IMP biosynthesis via de novo pathway; 5-formamido-1-(5-phospho-D-ribosyl)imidazole-4-carboxamide from 5-amino-1-(5-phospho-D-ribosyl)imidazole-4-carboxamide (10-formyl THF route): step 1/1. The protein operates within purine metabolism; IMP biosynthesis via de novo pathway; IMP from 5-formamido-1-(5-phospho-D-ribosyl)imidazole-4-carboxamide: step 1/1. In Rhizobium meliloti (strain 1021) (Ensifer meliloti), this protein is Bifunctional purine biosynthesis protein PurH.